Consider the following 385-residue polypeptide: Lipoyl synthase, mitochondrial (385 aa).

The interval 18–40 (TKAKNRTFSSSTVESSTKQPPQF) is disordered. Residues Cys-113, Cys-118, Cys-124, Cys-144, Cys-148, Cys-151, and Ser-360 each contribute to the [4Fe-4S] cluster site. One can recognise a Radical SAM core domain in the interval 129 to 349 (ETGTATATIM…KTLGMEMGFR (221 aa)).

It belongs to the radical SAM superfamily. Lipoyl synthase family. The cofactor is [4Fe-4S] cluster.

The protein resides in the mitochondrion. It carries out the reaction [[Fe-S] cluster scaffold protein carrying a second [4Fe-4S](2+) cluster] + N(6)-octanoyl-L-lysyl-[protein] + 2 oxidized [2Fe-2S]-[ferredoxin] + 2 S-adenosyl-L-methionine + 4 H(+) = [[Fe-S] cluster scaffold protein] + N(6)-[(R)-dihydrolipoyl]-L-lysyl-[protein] + 4 Fe(3+) + 2 hydrogen sulfide + 2 5'-deoxyadenosine + 2 L-methionine + 2 reduced [2Fe-2S]-[ferredoxin]. It participates in protein modification; protein lipoylation via endogenous pathway; protein N(6)-(lipoyl)lysine from octanoyl-[acyl-carrier-protein]: step 2/2. Its function is as follows. Catalyzes the radical-mediated insertion of two sulfur atoms into the C-6 and C-8 positions of the octanoyl moiety bound to the lipoyl domains of lipoate-dependent enzymes, thereby converting the octanoylated domains into lipoylated derivatives. The sequence is that of Lipoyl synthase, mitochondrial from Populus trichocarpa (Western balsam poplar).